Here is a 521-residue protein sequence, read N- to C-terminus: GMP synthase [glutamine-hydrolyzing] (521 aa).

The Glutamine amidotransferase type-1 domain maps to 8–203; that stretch reads KILILDFGAQ…VVDICGCQTL (196 aa). C85 functions as the Nucleophile in the catalytic mechanism. Active-site residues include H177 and E179. Residues 204–396 form the GMPS ATP-PPase domain; the sequence is WTAANIIDDQ…LGLPRTMVYR (193 aa). Residue 231-237 coordinates ATP; the sequence is SGGVDSS.

Homodimer.

The enzyme catalyses XMP + L-glutamine + ATP + H2O = GMP + L-glutamate + AMP + diphosphate + 2 H(+). It functions in the pathway purine metabolism; GMP biosynthesis; GMP from XMP (L-Gln route): step 1/1. In terms of biological role, catalyzes the synthesis of GMP from XMP. The sequence is that of GMP synthase [glutamine-hydrolyzing] from Xanthomonas oryzae pv. oryzae (strain MAFF 311018).